The primary structure comprises 138 residues: Endonuclease V (138 aa).

The Nucleophile; via amide nitrogen role is filled by Thr2. Glu23 functions as the Proton acceptor in the catalytic mechanism.

Monomer.

It carries out the reaction Cleaves the N-glycosidic bond between the 5'-pyrimidine residue in cyclobutadipyrimidine (in DNA) and the corresponding deoxy-D-ribose residue.. The catalysed reaction is 2'-deoxyribonucleotide-(2'-deoxyribose 5'-phosphate)-2'-deoxyribonucleotide-DNA = a 3'-end 2'-deoxyribonucleotide-(2,3-dehydro-2,3-deoxyribose 5'-phosphate)-DNA + a 5'-end 5'-phospho-2'-deoxyribonucleoside-DNA + H(+). Its function is as follows. Participates in the repair of UV-damaged DNA by excising pyrimidine dimers that are the major UV-lesions. DNA glycosylase activity hydrolyzes the glycosylic bond of the 5' pyrimidine of the dimer. This leaves apurinic/apyrimidic (AP) sites in the DNA. These AP sites are removed by the AP lyase activity which cleaves the intrapyrimidine phosphodiester bond. Catalysis proceeds via a protonated imine covalent intermediate between the alpha-amino group of the N-terminal threonine residue and the C1' of the deoxyribose sugar of the 5' pyrimidine at the dimer site. The sequence is that of Endonuclease V from Enterobacteria phage T4 (Bacteriophage T4).